The primary structure comprises 202 residues: MAEFSTPVRSGEATEGDLRVPRAGAEGEFTHRSQGAIRARDWPGYGQGSEKSMFIGRHYRKKRALSLCAVRTTKKACKLLIVMWTPPRNDQHYLNWQWYSSILSSHAAMCGCPDAVAHFNHLASVLRAPQNPPPPGPQRNLPLRRLPALPAAPEAPGDRAPWPMAGGAEGEDGGAGGDADHGGAAGGPEDADLLDAVAAAET.

2 disordered regions span residues 1-21 (MAEF…LRVP) and 149-202 (LPAA…AAET).

This is an uncharacterized protein from Torque teno virus 1 (isolate TA278).